Reading from the N-terminus, the 144-residue chain is Cytochrome c oxidase subunit 4 isoform 1, mitochondrial (144 aa).

Topologically, residues 1-73 are mitochondrial matrix; sequence SVVKSEDFTL…SFAEMNRRSN (73 aa). Residue Lys4 is modified to N6-acetyllysine; alternate. At Lys4 the chain carries N6-succinyllysine; alternate. Lys28 carries the N6-acetyllysine modification. Residues Ser31 and Ser33 each carry the phosphoserine modification. Residue Lys35 is modified to N6-acetyllysine; alternate. Lys35 carries the N6-succinyllysine; alternate modification. Lys42 is modified (N6-acetyllysine). Residues 74-99 form a helical membrane-spanning segment; the sequence is EWKTVVGTAMFFFGITALIVMWEKRY. Topologically, residues 100 to 144 are mitochondrial intermembrane; that stretch reads VYGPLPQTFDKEWVAMQTKRMLDMKVNPIQGLASKWDYEKNEWKK.

The protein belongs to the cytochrome c oxidase IV family. As to quaternary structure, component of the cytochrome c oxidase (complex IV, CIV), a multisubunit enzyme composed of 14 subunits. The complex is composed of a catalytic core of 3 subunits MT-CO1, MT-CO2 and MT-CO3, encoded in the mitochondrial DNA, and 11 supernumerary subunits COX4I, COX5A, COX5B, COX6A, COX6B, COX6C, COX7A, COX7B, COX7C, COX8 and NDUFA4, which are encoded in the nuclear genome. The complex exists as a monomer or a dimer and forms supercomplexes (SCs) in the inner mitochondrial membrane with NADH-ubiquinone oxidoreductase (complex I, CI) and ubiquinol-cytochrome c oxidoreductase (cytochrome b-c1 complex, complex III, CIII), resulting in different assemblies (supercomplex SCI(1)III(2)IV(1) and megacomplex MCI(2)III(2)IV(2)). Interacts with PHB2; the interaction decreases in absence of SPHK2. Interacts with AFG1L. Interacts with ABCB7; this interaction allows the regulation of cellular iron homeostasis and cellular reactive oxygen species (ROS) levels in cardiomyocytes. Interacts with FLVCR2; this interaction occurs in the absence of heme and is disrupted upon heme binding. Interacts with IRGC.

It is found in the mitochondrion inner membrane. Its pathway is energy metabolism; oxidative phosphorylation. Functionally, component of the cytochrome c oxidase, the last enzyme in the mitochondrial electron transport chain which drives oxidative phosphorylation. The respiratory chain contains 3 multisubunit complexes succinate dehydrogenase (complex II, CII), ubiquinol-cytochrome c oxidoreductase (cytochrome b-c1 complex, complex III, CIII) and cytochrome c oxidase (complex IV, CIV), that cooperate to transfer electrons derived from NADH and succinate to molecular oxygen, creating an electrochemical gradient over the inner membrane that drives transmembrane transport and the ATP synthase. Cytochrome c oxidase is the component of the respiratory chain that catalyzes the reduction of oxygen to water. Electrons originating from reduced cytochrome c in the intermembrane space (IMS) are transferred via the dinuclear copper A center (CU(A)) of subunit 2 and heme A of subunit 1 to the active site in subunit 1, a binuclear center (BNC) formed by heme A3 and copper B (CU(B)). The BNC reduces molecular oxygen to 2 water molecules using 4 electrons from cytochrome c in the IMS and 4 protons from the mitochondrial matrix. The sequence is that of Cytochrome c oxidase subunit 4 isoform 1, mitochondrial (COX4I1) from Theropithecus gelada (Gelada baboon).